The following is a 676-amino-acid chain: Pre-mRNA-splicing factor CLF1 (676 aa).

HAT repeat units follow at residues 46–78 (EYQG…WELE), 80–112 (REFA…CELK), 114–146 (KNIN…TEET), 148–179 (GNIA…MEKR), 181–212 (REFD…FEME), 215–255 (NRDT…FETR), 257–291 (REYE…FEKQ), 301–333 (VVLT…LGQE), 336–369 (LEAD…LWIK), 379–415 (KEVE…FEIR), 417–449 (GNLP…LEAK), 451–483 (REFD…LEQM), 485–519 (GDEE…FEAE), 521–553 (ENYD…FEVT), 576–614 (EAKA…FEEE), and 620–652 (SKAD…YVFP). A compositionally biased stretch (basic and acidic residues) spans 616–628 (GDDKSKADLDKRK). Residues 616-636 (GDDKSKADLDKRKPTPVKKKR) form a disordered region.

Belongs to the crooked-neck family. As to quaternary structure, associated with the spliceosome.

It localises to the nucleus. Involved in pre-mRNA splicing and cell cycle progression. Required for the spliceosome assembly and initiation of the DNA replication. This is Pre-mRNA-splicing factor CLF1 (CLF1) from Yarrowia lipolytica (strain CLIB 122 / E 150) (Yeast).